Here is a 377-residue protein sequence, read N- to C-terminus: Multiple sugar-binding transport ATP-binding protein MsmK (377 aa).

The region spanning 4–246 (LNLNHIYKKY…PANKFVAGFI (243 aa)) is the ABC transporter domain. 38-45 (GPSGCGKS) is a binding site for ATP.

This sequence belongs to the ABC transporter superfamily.

The protein localises to the cell membrane. Functionally, involved in a binding protein-dependent transport system responsible for the uptake of melibiose, raffinose and isomaltotriose. Probably responsible for energy coupling to the transport system. The chain is Multiple sugar-binding transport ATP-binding protein MsmK (msmK) from Streptococcus mutans serotype c (strain ATCC 700610 / UA159).